A 179-amino-acid chain; its full sequence is MARLQKLYREKIAAELKEKFGYTSSMEVPRLTKITLNMGVSEAVADKKVMDNAVADLTKIAGQKPVVTKAKKAIAGFKIREGQAIGCMVTLRGVQMYEFLDRFVTVALPRVRDFRGISGRSFDGRGNYNVGVKEQIIFPEIEYDKVDALRGLNISITTTARTDDECKALLAAFRFPFKN.

Belongs to the universal ribosomal protein uL5 family. As to quaternary structure, part of the 50S ribosomal subunit; part of the 5S rRNA/L5/L18/L25 subcomplex. Contacts the 5S rRNA and the P site tRNA. Forms a bridge to the 30S subunit in the 70S ribosome.

Functionally, this is one of the proteins that bind and probably mediate the attachment of the 5S RNA into the large ribosomal subunit, where it forms part of the central protuberance. In the 70S ribosome it contacts protein S13 of the 30S subunit (bridge B1b), connecting the 2 subunits; this bridge is implicated in subunit movement. Contacts the P site tRNA; the 5S rRNA and some of its associated proteins might help stabilize positioning of ribosome-bound tRNAs. This is Large ribosomal subunit protein uL5 from Delftia acidovorans (strain DSM 14801 / SPH-1).